A 258-amino-acid chain; its full sequence is tRNA pseudouridine synthase A (258 aa).

Asp54 (nucleophile) is an active-site residue. Residue Tyr112 participates in substrate binding.

The protein belongs to the tRNA pseudouridine synthase TruA family. Homodimer.

It carries out the reaction uridine(38/39/40) in tRNA = pseudouridine(38/39/40) in tRNA. In terms of biological role, formation of pseudouridine at positions 38, 39 and 40 in the anticodon stem and loop of transfer RNAs. The polypeptide is tRNA pseudouridine synthase A (Geobacillus kaustophilus (strain HTA426)).